The following is a 953-amino-acid chain: 26S proteasome non-ATPase regulatory subunit 1 (953 aa).

M1 bears the N-acetylmethionine mark. T273 is subject to Phosphothreonine. The interval 277–319 (SVPGSTNTGTVPGPEKDSDSMETEEKTAGAVAGKTPDASPEPK) is disordered. Positions 290-303 (PEKDSDSMETEEKT) are enriched in basic and acidic residues. K310 is modified (N6-acetyllysine). Residue T311 is modified to Phosphothreonine. Phosphoserine is present on S315. PC repeat units follow at residues 403–436 (TATA…PGSA), 441–474 (GGLY…DIVR), 476–510 (GGSL…VTGE), 511–545 (AAGL…EKIL), 547–580 (GLAV…ILRR), 581–616 (SGMY…DVRR), 617–649 (AAVE…PHVR), 651–685 (GAAM…YVRQ), 686–726 (GALI…DVMA), and 729–761 (GAIL…PSVV). K720 is subject to N6-acetyllysine. T830 is modified (phosphothreonine). Position 834 is a phosphoserine (S834). Disordered stretches follow at residues 839-881 (AKKK…LDNP) and 930-953 (AHGP…YIDD). 2 stretches are compositionally biased toward basic and acidic residues: residues 842-852 (KEKEKEKKEEE) and 859-872 (AEKK…KEPE). Residues 936-953 (EEEEQEPEPPEPFEYIDD) are compositionally biased toward acidic residues.

The protein belongs to the proteasome subunit S1 family. In terms of assembly, component of the 19S proteasome regulatory particle complex. The 26S proteasome consists of a 20S core particle (CP) and two 19S regulatory subunits (RP). The regulatory particle is made of a lid composed of 9 subunits, a base containing 6 ATPases and few additional components including PSMD1. Interacts with ADRM1. Interacts with ZFAND1.

Component of the 26S proteasome, a multiprotein complex involved in the ATP-dependent degradation of ubiquitinated proteins. This complex plays a key role in the maintenance of protein homeostasis by removing misfolded or damaged proteins, which could impair cellular functions, and by removing proteins whose functions are no longer required. Therefore, the proteasome participates in numerous cellular processes, including cell cycle progression, apoptosis, or DNA damage repair. This chain is 26S proteasome non-ATPase regulatory subunit 1 (Psmd1), found in Rattus norvegicus (Rat).